A 154-amino-acid chain; its full sequence is UPF0756 membrane protein EAT1b_0668 (154 aa).

The next 5 helical transmembrane spans lie at 5 to 25 (LFLL…VIIA), 52 to 72 (WGVT…DIGF), 82 to 102 (PVGI…GQGV), 107 to 127 (VDPV…GFMK), and 129 to 149 (IPVG…GYQV).

Belongs to the UPF0756 family.

It localises to the cell membrane. The chain is UPF0756 membrane protein EAT1b_0668 from Exiguobacterium sp. (strain ATCC BAA-1283 / AT1b).